A 625-amino-acid polypeptide reads, in one-letter code: Alpha-amylase 1 (625 aa).

The first 22 residues, 1–22, serve as a signal peptide directing secretion; that stretch reads MGFSKIALFSLFALFGLPTSLA. C51 and C59 are disulfide-bonded. Substrate is bound at residue W105. N143 is a binding site for Ca(2+). N-linked (GlcNAc...) asparagine glycans are attached at residues N153, N163, and N180. Residues C172 and C187 are joined by a disulfide bond. Ca(2+)-binding residues include E185 and D198. Substrate is bound at residue R227. D229 provides a ligand contact to Ca(2+). Catalysis depends on D229, which acts as the Nucleophile. Position 232–233 (232–233) interacts with substrate; the sequence is KQ. N-linked (GlcNAc...) asparagine glycosylation is present at N241. E253 serves as a coordination point for Ca(2+). The active-site Proton donor is the E253. N260 and N286 each carry an N-linked (GlcNAc...) asparagine glycan. C263 and C306 are oxidised to a cystine. A substrate-binding site is contributed by D322. N-linked (GlcNAc...) asparagine glycosylation is present at N331. R370 contacts substrate. 2 N-linked (GlcNAc...) asparagine glycosylation sites follow: N440 and N461. The tract at residues 526-579 is disordered; it reads SATSSSKSSSSSSSRSGSSSSSSSRSGSTSSSGSSHTITSTSQSVHTSGSSTST. The GPI-anchor amidated serine moiety is linked to residue S603. A propeptide spans 604 to 625 (removed in mature form); sequence SANAVRVSILGVAAFIAIVLFI.

The protein belongs to the glycosyl hydrolase 13 family. The cofactor is Ca(2+).

It localises to the cell membrane. The enzyme catalyses Endohydrolysis of (1-&gt;4)-alpha-D-glucosidic linkages in polysaccharides containing three or more (1-&gt;4)-alpha-linked D-glucose units.. In Schizosaccharomyces pombe (strain 972 / ATCC 24843) (Fission yeast), this protein is Alpha-amylase 1 (aah1).